We begin with the raw amino-acid sequence, 924 residues long: Bifunctional glutamine synthetase adenylyltransferase/adenylyl-removing enzyme (924 aa).

The adenylyl removase stretch occupies residues 1–422; it reads MQTKGCRFFM…QFKKLIQEEV (422 aa). The adenylyl transferase stretch occupies residues 424-924; it reads SPDETDTELE…PASTMALESE (501 aa).

Belongs to the GlnE family. Mg(2+) serves as cofactor.

It carries out the reaction [glutamine synthetase]-O(4)-(5'-adenylyl)-L-tyrosine + phosphate = [glutamine synthetase]-L-tyrosine + ADP. The enzyme catalyses [glutamine synthetase]-L-tyrosine + ATP = [glutamine synthetase]-O(4)-(5'-adenylyl)-L-tyrosine + diphosphate. Functionally, involved in the regulation of glutamine synthetase GlnA, a key enzyme in the process to assimilate ammonia. When cellular nitrogen levels are high, the C-terminal adenylyl transferase (AT) inactivates GlnA by covalent transfer of an adenylyl group from ATP to specific tyrosine residue of GlnA, thus reducing its activity. Conversely, when nitrogen levels are low, the N-terminal adenylyl removase (AR) activates GlnA by removing the adenylyl group by phosphorolysis, increasing its activity. The regulatory region of GlnE binds the signal transduction protein PII (GlnB) which indicates the nitrogen status of the cell. This is Bifunctional glutamine synthetase adenylyltransferase/adenylyl-removing enzyme from Acinetobacter baylyi (strain ATCC 33305 / BD413 / ADP1).